The primary structure comprises 192 residues: uncharacterized protein (192 aa).

The Nudix hydrolase domain occupies 29 to 160 (HRQAAVLIPI…PLDIYRRGDS (132 aa)). The Nudix box signature appears at 67 to 89 (GAVDDTDTSVIAAALREAEEEVA). Mg(2+) contacts are provided by E83 and E87.

Belongs to the Nudix hydrolase family. PCD1 subfamily. Mn(2+) serves as cofactor. Requires Mg(2+) as cofactor.

In terms of biological role, probably mediates the hydrolysis of some nucleoside diphosphate derivatives. This is an uncharacterized protein from Escherichia coli O6:H1 (strain CFT073 / ATCC 700928 / UPEC).